The sequence spans 289 residues: Shikimate dehydrogenase (NADP(+)) (289 aa).

Shikimate contacts are provided by residues 20-22 and S67; that span reads SIS. Residue K71 is the Proton acceptor of the active site. D83 lines the NADP(+) pocket. Residues N92 and D107 each coordinate shikimate. NADP(+) is bound by residues 132 to 136 and V230; that span reads GGGGA. Y232 lines the shikimate pocket. G253 contacts NADP(+).

This sequence belongs to the shikimate dehydrogenase family. In terms of assembly, homodimer.

The enzyme catalyses shikimate + NADP(+) = 3-dehydroshikimate + NADPH + H(+). It participates in metabolic intermediate biosynthesis; chorismate biosynthesis; chorismate from D-erythrose 4-phosphate and phosphoenolpyruvate: step 4/7. In terms of biological role, involved in the biosynthesis of the chorismate, which leads to the biosynthesis of aromatic amino acids. Catalyzes the reversible NADPH linked reduction of 3-dehydroshikimate (DHSA) to yield shikimate (SA). The sequence is that of Shikimate dehydrogenase (NADP(+)) from Streptococcus suis (strain 98HAH33).